The sequence spans 66 residues: Large ribosomal subunit protein bL33c (66 aa).

This sequence belongs to the bacterial ribosomal protein bL33 family.

The protein localises to the plastid. The protein resides in the chloroplast. In Populus alba (White poplar), this protein is Large ribosomal subunit protein bL33c.